Consider the following 439-residue polypeptide: Casein kinase I homolog 3 (439 aa).

The Protein kinase domain maps to 15–286; that stretch reads YRVGKKIGEG…LRSLFDSLLL (272 aa). ATP is bound by residues 21–29 and Lys-44; that span reads IGEGSFGML. Asp-134 (proton acceptor) is an active-site residue. The disordered stretch occupies residues 366–426; that stretch reads DGIPGKAASP…PSKEKSRKKF (61 aa). Residues 372–413 show a composition bias toward low complexity; the sequence is AASPQVQQQQQTSSAQQQQPQRVEQPAPQTTQPTQVDTQQAA.

Belongs to the protein kinase superfamily. CK1 Ser/Thr protein kinase family. Casein kinase I subfamily.

The protein resides in the cytoplasm. It carries out the reaction L-seryl-[protein] + ATP = O-phospho-L-seryl-[protein] + ADP + H(+). The enzyme catalyses L-threonyl-[protein] + ATP = O-phospho-L-threonyl-[protein] + ADP + H(+). Its function is as follows. Casein kinases are operationally defined by their preferential utilization of acidic proteins such as caseins as substrates. The protein is Casein kinase I homolog 3 (cki3) of Schizosaccharomyces pombe (strain 972 / ATCC 24843) (Fission yeast).